The following is a 349-amino-acid chain: Protein-glutamate methylesterase/protein-glutamine glutaminase (349 aa).

The 118-residue stretch at 5 to 122 folds into the Response regulatory domain; that stretch reads RVLSVDDSAL…REGMLAYNEM (118 aa). A 4-aspartylphosphate modification is found at Asp56. One can recognise a CheB-type methylesterase domain in the interval 152–344; it reads LLSSEKLIAI…QQMLAKISAG (193 aa). Catalysis depends on residues Ser164, His190, and Asp286.

The protein belongs to the CheB family. Interacts with CheA. Binds to a C-terminal pentapeptide sequence carried by certain receptors. Post-translationally, phosphorylated by CheA. Phosphorylation of the N-terminal regulatory domain activates the methylesterase activity.

It localises to the cytoplasm. The enzyme catalyses [protein]-L-glutamate 5-O-methyl ester + H2O = L-glutamyl-[protein] + methanol + H(+). It carries out the reaction L-glutaminyl-[protein] + H2O = L-glutamyl-[protein] + NH4(+). With respect to regulation, methylesterase activity is activated via phosphorylation in response to negative chemotactic stimuli and is inhibited in the presence of attractants. Activation requires both CheA and CheW. Involved in chemotaxis. Part of a chemotaxis signal transduction system that modulates chemotaxis in response to various stimuli. Catalyzes the demethylation of specific methylglutamate residues introduced into the chemoreceptors (methyl-accepting chemotaxis proteins or MCP) by CheR. Also mediates the irreversible deamidation of specific glutamine residues to glutamic acid. Catalyzes its own deactivation by removing the activating phosphoryl group. The protein is Protein-glutamate methylesterase/protein-glutamine glutaminase of Escherichia coli (strain K12).